The sequence spans 218 residues: Ribose-5-phosphate isomerase A (218 aa).

Residues Thr28 to Thr31, Asp81 to Asp84, and Lys94 to Gly97 contribute to the substrate site. The active-site Proton acceptor is Glu103. Residue Lys121 participates in substrate binding.

Belongs to the ribose 5-phosphate isomerase family. Homodimer.

It catalyses the reaction aldehydo-D-ribose 5-phosphate = D-ribulose 5-phosphate. It participates in carbohydrate degradation; pentose phosphate pathway; D-ribose 5-phosphate from D-ribulose 5-phosphate (non-oxidative stage): step 1/1. Catalyzes the reversible conversion of ribose-5-phosphate to ribulose 5-phosphate. The protein is Ribose-5-phosphate isomerase A of Thioalkalivibrio sulfidiphilus (strain HL-EbGR7).